Consider the following 290-residue polypeptide: Phosphatidylglycerol--prolipoprotein diacylglyceryl transferase (290 aa).

The next 7 helical transmembrane spans lie at 21–41, 60–80, 96–116, 124–144, 198–218, 225–245, and 260–280; these read VALH…MWLA, LLYA…VLFY, WDGG…MVIF, FFQV…AGRL, SQLY…NLFI, GSVS…VEFF, and ISMG…MMIW. An a 1,2-diacyl-sn-glycero-3-phospho-(1'-sn-glycerol)-binding site is contributed by arginine 143.

It belongs to the Lgt family.

The protein resides in the cell inner membrane. It carries out the reaction L-cysteinyl-[prolipoprotein] + a 1,2-diacyl-sn-glycero-3-phospho-(1'-sn-glycerol) = an S-1,2-diacyl-sn-glyceryl-L-cysteinyl-[prolipoprotein] + sn-glycerol 1-phosphate + H(+). The protein operates within protein modification; lipoprotein biosynthesis (diacylglyceryl transfer). In terms of biological role, catalyzes the transfer of the diacylglyceryl group from phosphatidylglycerol to the sulfhydryl group of the N-terminal cysteine of a prolipoprotein, the first step in the formation of mature lipoproteins. This Enterobacter sp. (strain 638) protein is Phosphatidylglycerol--prolipoprotein diacylglyceryl transferase.